A 589-amino-acid polypeptide reads, in one-letter code: Acyl-CoA ligase SID4 (589 aa).

Residues Arg-12–Ile-20 carry the PTS2-type peroxisomal targeting signal motif. Residues Thr-228 to Lys-236, Ser-367 to Thr-372, Asp-458, and Arg-473 contribute to the ATP site. A substrate-binding site is contributed by Thr-372. CoA contacts are provided by residues Gly-481–Glu-483, Lys-547, and Phe-555–Leu-557. Lys-572 contributes to the ATP binding site.

This sequence belongs to the ATP-dependent AMP-binding enzyme family.

The protein localises to the peroxisome. Its pathway is siderophore biosynthesis. Its function is as follows. Acyl-CoA ligase; part of the gene cluster that mediates the biosynthesis of hydroxamate-containing siderophores that play a critical role in virulence via intracellular iron acquisition during macrophage infection. The polypeptide is Acyl-CoA ligase SID4 (Ajellomyces capsulatus (Darling's disease fungus)).